Consider the following 334-residue polypeptide: Glycerol-3-phosphate dehydrogenase [NAD(P)+] (334 aa).

Residues tryptophan 13, arginine 33, and lysine 106 each contribute to the NADPH site. Sn-glycerol 3-phosphate contacts are provided by lysine 106, glycine 137, and serine 139. Alanine 141 provides a ligand contact to NADPH. Sn-glycerol 3-phosphate-binding residues include lysine 192, aspartate 245, serine 255, arginine 256, and asparagine 257. The Proton acceptor role is filled by lysine 192. NADPH is bound at residue arginine 256. NADPH-binding residues include valine 280 and glutamate 282.

This sequence belongs to the NAD-dependent glycerol-3-phosphate dehydrogenase family.

It localises to the cytoplasm. It carries out the reaction sn-glycerol 3-phosphate + NAD(+) = dihydroxyacetone phosphate + NADH + H(+). It catalyses the reaction sn-glycerol 3-phosphate + NADP(+) = dihydroxyacetone phosphate + NADPH + H(+). The protein operates within membrane lipid metabolism; glycerophospholipid metabolism. Its function is as follows. Catalyzes the reduction of the glycolytic intermediate dihydroxyacetone phosphate (DHAP) to sn-glycerol 3-phosphate (G3P), the key precursor for phospholipid synthesis. The sequence is that of Glycerol-3-phosphate dehydrogenase [NAD(P)+] from Chlamydia caviae (strain ATCC VR-813 / DSM 19441 / 03DC25 / GPIC) (Chlamydophila caviae).